The sequence spans 144 residues: Maximins 4/H3 type 1 (144 aa).

The first 18 residues, 1–18 (MNFKYIIAVSFFIASAYA), serve as a signal peptide directing secretion. The propeptide occupies 19–43 (RSEEKDVQSLSQRDVLEEESLREIR). Asparagine 70 carries the asparagine amide modification. Positions 74 to 123 (TAEDHEVMKRLEAVMRDLDSLDHPEEASERETRGFNQEEIANLFTKKEKR) are excised as a propeptide. Isoleucine 143 bears the Isoleucine amide mark.

Belongs to the bombinin family. In terms of tissue distribution, expressed by the skin glands.

It is found in the secreted. In terms of biological role, maximin-4 shows antibacterial activity against both Gram-positive and Gram-negative bacteria. It also shows antimicrobial activity against the fungus C.albicans, but not against A.flavus nor P.uticale. It has little hemolytic activity. It does not possess a significant cytotoxicity against tumor cell lines. It does not possess a significant anti-HIV activity. Its function is as follows. Maximin-H3 shows antibacterial activity against both Gram-positive and Gram-negative bacteria. It also shows antimicrobial activity against the fungus C.albicans. Shows strong hemolytic activity. This chain is Maximins 4/H3 type 1, found in Bombina maxima (Giant fire-bellied toad).